Consider the following 23-residue polypeptide: Apolipophorin-3 (23 aa).

This sequence belongs to the insect apolipophorin-3 family. In terms of assembly, equilibrium between a soluble monomer and a bound lipoprotein form. Apolipophorin-3 associates with lipophorin during lipid loading until each particle contains 9 or 14 molecules of apolipophorin-3. As to expression, hemolymph.

Its subcellular location is the secreted. Assists in the loading of diacylglycerol, generated from triacylglycerol stores in the fat body through the action of adipokinetic hormone, into lipophorin, the hemolymph lipoprotein. It increases the lipid carrying capacity of lipophorin by covering the expanding hydrophobic surface resulting from diacylglycerol uptake. It thus plays a critical role in the transport of lipids during flight in several species of insects. This is Apolipophorin-3 from Melanoplus sanguinipes (Migratory grasshopper).